Consider the following 616-residue polypeptide: Dihydroxy-acid dehydratase (616 aa).

Asp81 is a Mg(2+) binding site. Cys122 lines the [2Fe-2S] cluster pocket. Residues Asp123 and Lys124 each coordinate Mg(2+). Lys124 is subject to N6-carboxylysine. Position 195 (Cys195) interacts with [2Fe-2S] cluster. Glu491 provides a ligand contact to Mg(2+). Ser517 functions as the Proton acceptor in the catalytic mechanism.

This sequence belongs to the IlvD/Edd family. Homodimer. [2Fe-2S] cluster is required as a cofactor. It depends on Mg(2+) as a cofactor.

The catalysed reaction is (2R)-2,3-dihydroxy-3-methylbutanoate = 3-methyl-2-oxobutanoate + H2O. It catalyses the reaction (2R,3R)-2,3-dihydroxy-3-methylpentanoate = (S)-3-methyl-2-oxopentanoate + H2O. The protein operates within amino-acid biosynthesis; L-isoleucine biosynthesis; L-isoleucine from 2-oxobutanoate: step 3/4. It participates in amino-acid biosynthesis; L-valine biosynthesis; L-valine from pyruvate: step 3/4. In terms of biological role, functions in the biosynthesis of branched-chain amino acids. Catalyzes the dehydration of (2R,3R)-2,3-dihydroxy-3-methylpentanoate (2,3-dihydroxy-3-methylvalerate) into 2-oxo-3-methylpentanoate (2-oxo-3-methylvalerate) and of (2R)-2,3-dihydroxy-3-methylbutanoate (2,3-dihydroxyisovalerate) into 2-oxo-3-methylbutanoate (2-oxoisovalerate), the penultimate precursor to L-isoleucine and L-valine, respectively. The sequence is that of Dihydroxy-acid dehydratase from Erwinia tasmaniensis (strain DSM 17950 / CFBP 7177 / CIP 109463 / NCPPB 4357 / Et1/99).